The sequence spans 354 residues: Protein-arginine kinase (354 aa).

Residues 24-254 (IVLSSRIRLA…QQIIQQEKLA (231 aa)) enclose the Phosphagen kinase C-terminal domain. Residues 27-31 (SSRIR), histidine 92, arginine 125, 176-180 (RASVM), and 207-212 (RGIYGE) each bind ATP. The RDXXRA motif of the pArg binding pocket involved in allosteric regulation signature appears at 337 to 342 (RDYRRA).

Belongs to the ATP:guanido phosphotransferase family.

The catalysed reaction is L-arginyl-[protein] + ATP = N(omega)-phospho-L-arginyl-[protein] + ADP + H(+). Its activity is regulated as follows. Appears to be allosterically activated by the binding of pArg-containing polypeptides to the pArg-binding pocket localized in the C-terminal domain of McsB. In terms of biological role, catalyzes the specific phosphorylation of arginine residues in a large number of proteins. Is part of the bacterial stress response system. Protein arginine phosphorylation has a physiologically important role and is involved in the regulation of many critical cellular processes, such as protein homeostasis, motility, competence, and stringent and stress responses, by regulating gene expression and protein activity. In Bacillus cereus (strain B4264), this protein is Protein-arginine kinase.